The primary structure comprises 531 residues: Serine-type carboxypeptidase F (531 aa).

The first 25 residues, 1 to 25 (MLFRSLLSTAVLAVSLCTDNASAAK), serve as a signal peptide directing secretion. Asn20 carries N-linked (GlcNAc...) asparagine glycosylation. The propeptide occupies 26 to 52 (HGRFGQKARDAMNIAKRSANAVKHSLK). N-linked (GlcNAc...) asparagine glycosylation is found at Asn63, Asn94, and Asn155. Residue Ser211 is part of the active site. 4 N-linked (GlcNAc...) asparagine glycosylation sites follow: Asn228, Asn271, Asn309, and Asn378. Residue Asp430 is part of the active site. 2 N-linked (GlcNAc...) asparagine glycosylation sites follow: Asn436 and Asn444. Residue His507 is part of the active site.

The protein belongs to the peptidase S10 family. As to quaternary structure, monomer.

Inhibited by DFP, and Hg(Cl)2. Removes any amino acid from the C-terminus of a long peptide. Digests preferentially peptides containing a positively charged residue in P1' position, as well as arginine, lysine or phenylalanine in P1 position of ester substrate. Also catalyzes peptide synthesis. The protein is Serine-type carboxypeptidase F (pepF) of Aspergillus niger.